The sequence spans 368 residues: MSFRTEPPYIHGSTPKTAVVLVNLGTPDAPTTSAVRRYLKQFLSDPRVVEIPRAIWWFILHLVILPFRSGQSAKKYASIWSNEGSPLKVHTEKQAKLLNGYLGERGHKVKVVYAMRYGQPALPDVLRQLKADGCERILFLPAYPQYSGTTTASIFDAVFSHYTQERNVPELRFIKHYHDHDAYIRALRKSVQAHWDMAGRPDKLVMSFHGVPKRTLTLGDPYHCECHKTARLLAKELELTQEQYMVTFQSRFGKAEWLQPYTAPTLQKLAKEGIGRVDVICPGFTSDCLETLEEIAMEARHDFMSAGGKDFNYIGCLNEDDAWIKAMAEITELHLIGWPTIVPPSLREEQEQQAHISREEARRLGADQ.

2 residues coordinate Fe cation: His-209 and Glu-290. A disordered region spans residues 347-368 (REEQEQQAHISREEARRLGADQ).

The protein belongs to the ferrochelatase family.

It is found in the cytoplasm. The catalysed reaction is heme b + 2 H(+) = protoporphyrin IX + Fe(2+). Its pathway is porphyrin-containing compound metabolism; protoheme biosynthesis; protoheme from protoporphyrin-IX: step 1/1. Catalyzes the ferrous insertion into protoporphyrin IX. The protein is Ferrochelatase of Janthinobacterium sp. (strain Marseille) (Minibacterium massiliensis).